Consider the following 438-residue polypeptide: Serine/threonine-protein kinase VIK (438 aa).

The disordered stretch occupies residues 1–31 (MSSDSPAAGDGGEQAAAGTSVPSPSYDKQKE). ANK repeat units follow at residues 36-65 (SRTS…TLVH), 70-99 (DKRT…DVNA), and 103-133 (WKNT…SYGQ). One can recognise a Protein kinase domain in the interval 162–427 (FSNAAMIGKG…KRLEKIKETL (266 aa)). Residues 168-176 (IGKGSFGEI) and Lys189 contribute to the ATP site. The Proton acceptor role is filled by Asp285.

The protein belongs to the protein kinase superfamily. Ser/Thr protein kinase family. Interacts with BRL2. Binds to MSSP1/TMT1 at the tonoplast. In terms of processing, phosphorylated. In terms of tissue distribution, restricted to mature vascular cells. Mostly expressed in mature leaves and seeds, and, to a lower level, in seedlings, young leaves, flowers and siliques.

The protein resides in the vacuole. The catalysed reaction is L-seryl-[protein] + ATP = O-phospho-L-seryl-[protein] + ADP + H(+). The enzyme catalyses L-threonyl-[protein] + ATP = O-phospho-L-threonyl-[protein] + ADP + H(+). Functionally, serine/threonine protein kinase which may function as an adapter protein for BRL2. Required during vascular development for the establishment of vein pattern in foliar organs. Mediates MSSP1/TMT1 phosphorylation and activation to enhance its carrier activity and consequently vacuolar sugar accumulation, particularly in response to cold. The polypeptide is Serine/threonine-protein kinase VIK (Arabidopsis thaliana (Mouse-ear cress)).